The sequence spans 92 residues: Small ribosomal subunit protein uS19 (92 aa).

This sequence belongs to the universal ribosomal protein uS19 family.

In terms of biological role, protein S19 forms a complex with S13 that binds strongly to the 16S ribosomal RNA. The protein is Small ribosomal subunit protein uS19 of Staphylococcus epidermidis (strain ATCC 35984 / DSM 28319 / BCRC 17069 / CCUG 31568 / BM 3577 / RP62A).